Consider the following 158-residue polypeptide: Cyclic pyranopterin monophosphate synthase (158 aa).

Substrate contacts are provided by residues 75 to 77 (LCH) and 113 to 114 (ME). The active site involves aspartate 128.

The protein belongs to the MoaC family. As to quaternary structure, homohexamer; trimer of dimers.

The enzyme catalyses (8S)-3',8-cyclo-7,8-dihydroguanosine 5'-triphosphate = cyclic pyranopterin phosphate + diphosphate. It participates in cofactor biosynthesis; molybdopterin biosynthesis. Catalyzes the conversion of (8S)-3',8-cyclo-7,8-dihydroguanosine 5'-triphosphate to cyclic pyranopterin monophosphate (cPMP). In Pasteurella multocida (strain Pm70), this protein is Cyclic pyranopterin monophosphate synthase.